The sequence spans 124 residues: MNLIAQLEAEQIAELGKDIPDFKAGDTIRVGYKVTEGTRSRVQNYEGVCIARKGGDGIAASFTVRKISFGEGVERVFPLHSTNIDSIEVVRRGKVRRAKLYYLRARRGKSARIAEQTNYKPKSN.

It belongs to the bacterial ribosomal protein bL19 family.

This protein is located at the 30S-50S ribosomal subunit interface and may play a role in the structure and function of the aminoacyl-tRNA binding site. This is Large ribosomal subunit protein bL19 from Dinoroseobacter shibae (strain DSM 16493 / NCIMB 14021 / DFL 12).